A 151-amino-acid chain; its full sequence is Transcriptional repressor NrdR (151 aa).

Residues 3–34 (CPYCAYGESKVVDSRSTEDGSSIRRRRECLKC) fold into a zinc finger. One can recognise an ATP-cone domain in the interval 49-139 (ILVIKKNMSR…VYRQFKDINT (91 aa)).

The protein belongs to the NrdR family. Zn(2+) is required as a cofactor.

Functionally, negatively regulates transcription of bacterial ribonucleotide reductase nrd genes and operons by binding to NrdR-boxes. The chain is Transcriptional repressor NrdR from Clostridium botulinum (strain ATCC 19397 / Type A).